Consider the following 253-residue polypeptide: Tetraspanin-11 (253 aa).

3 consecutive transmembrane segments (helical) span residues 19 to 39 (LLFVFNFFFWVGGAAVLAVGI), 63 to 83 (ILIFAGVLVMVTGFLGFGAIL), and 93 to 113 (YFCLLLVIFLVELVAGVLAHV). Asn127 carries an N-linked (GlcNAc...) asparagine glycan. A helical transmembrane segment spans residues 220–240 (LLLMGAVGIGVACLQICGMVL).

Belongs to the tetraspanin (TM4SF) family.

It localises to the membrane. This chain is Tetraspanin-11 (TSPAN11), found in Homo sapiens (Human).